A 557-amino-acid chain; its full sequence is 2-succinyl-5-enolpyruvyl-6-hydroxy-3-cyclohexene-1-carboxylate synthase (557 aa).

It belongs to the TPP enzyme family. MenD subfamily. Homodimer. Mg(2+) is required as a cofactor. The cofactor is Mn(2+). Requires thiamine diphosphate as cofactor.

It carries out the reaction isochorismate + 2-oxoglutarate + H(+) = 5-enolpyruvoyl-6-hydroxy-2-succinyl-cyclohex-3-ene-1-carboxylate + CO2. It participates in quinol/quinone metabolism; 1,4-dihydroxy-2-naphthoate biosynthesis; 1,4-dihydroxy-2-naphthoate from chorismate: step 2/7. The protein operates within quinol/quinone metabolism; menaquinone biosynthesis. Functionally, catalyzes the thiamine diphosphate-dependent decarboxylation of 2-oxoglutarate and the subsequent addition of the resulting succinic semialdehyde-thiamine pyrophosphate anion to isochorismate to yield 2-succinyl-5-enolpyruvyl-6-hydroxy-3-cyclohexene-1-carboxylate (SEPHCHC). In Staphylococcus aureus (strain USA300), this protein is 2-succinyl-5-enolpyruvyl-6-hydroxy-3-cyclohexene-1-carboxylate synthase.